The sequence spans 252 residues: UPF0736 protein OB1207 (252 aa).

The protein belongs to the UPF0736 family.

The chain is UPF0736 protein OB1207 from Oceanobacillus iheyensis (strain DSM 14371 / CIP 107618 / JCM 11309 / KCTC 3954 / HTE831).